A 358-amino-acid chain; its full sequence is Ion-translocating oxidoreductase complex subunit D (358 aa).

A run of 4 helical transmembrane segments spans residues 19–39 (IMLWVILAMMPAFFTQIYYFG), 41–61 (GVVLQSALAIGTAIIAEFIAI), 79–99 (LTALILAMAIPPYAPYWVIII), and 125–145 (IGYVILLISFPLQMTTWMPPI). An FMN phosphoryl threonine modification is found at Thr186. The next 5 helical transmembrane spans lie at 220-240 (FAQGWWQINVAFLAGGIFLIL), 248-268 (IPVAMLVTFFCLATATAFTGF), 271-291 (LSAISQLVSGAMMFGAFFIAT), 297-317 (SITPRGKIIFGALVGLFVYLI), and 321-341 (GNYPDGVAFAILLSNICVPLI).

It belongs to the NqrB/RnfD family. The complex is composed of six subunits: RnfA, RnfB, RnfC, RnfD, RnfE and RnfG. FMN is required as a cofactor.

The protein resides in the cell inner membrane. Functionally, part of a membrane-bound complex that couples electron transfer with translocation of ions across the membrane. The chain is Ion-translocating oxidoreductase complex subunit D from Haemophilus influenzae (strain PittGG).